A 269-amino-acid chain; its full sequence is Tryptophan synthase alpha chain (269 aa).

Active-site proton acceptor residues include Glu45 and Asp56.

It belongs to the TrpA family. As to quaternary structure, tetramer of two alpha and two beta chains.

The enzyme catalyses (1S,2R)-1-C-(indol-3-yl)glycerol 3-phosphate + L-serine = D-glyceraldehyde 3-phosphate + L-tryptophan + H2O. It participates in amino-acid biosynthesis; L-tryptophan biosynthesis; L-tryptophan from chorismate: step 5/5. Its function is as follows. The alpha subunit is responsible for the aldol cleavage of indoleglycerol phosphate to indole and glyceraldehyde 3-phosphate. The sequence is that of Tryptophan synthase alpha chain from Shouchella clausii (strain KSM-K16) (Alkalihalobacillus clausii).